Reading from the N-terminus, the 378-residue chain is VDFNVPIKDGRITDSNRIQATLPSIQAVLDNGAKSLVLMSHLGRPDGRRDEKSSLRPVAEQLQTLLGRPVTFLEDCVGPEIESACADPAPGSVFLLENLRFHPEEEGAGVDESGNKFKPSQEQVQTFRDSLTRLGDVYINDAFGTAHRAHSSMAGINLPQRAAGYLMGKELEYFSRALENPNRPLLVIMGGAKVSDKIQLINNLLDNCNEMIIAGGMAFTFKKVLDNLEIGNSLFDEAGAKIVQGIIDKAAERHVQIHLPTDFVCGDKFETGCNVQTYSGNIPEGFMGLDIGPELQEAMAQAIQRAETIVWNGPPGVFEIPEFRAGSERFFREIVAATRDRRVVSIVGGGDTAAFAKTMGDESDVISHISTGGGASDP.

Positions 1, 2, 3, 4, 16, 17, 40, 41, 43, 44, 99, 100, 147, and 148 each coordinate (2R)-3-phosphoglycerate. Gly191 contributes to the ADP binding site. Residue Gly191 participates in CDP binding. AMP contacts are provided by Ala192 and Lys193. Ala192 contributes to the ATP binding site. Ala192 is a binding site for Mg(2+). Position 196 (Asp196) interacts with CDP. Asp196 contributes to the Mg(2+) binding site. An AMP-binding site is contributed by Lys197. Residue Lys197 coordinates ATP. ADP is bound at residue Gly215. CDP is bound at residue Gly215. Positions 216 and 288 each coordinate AMP. ATP is bound by residues Gly216 and Gly288. 2 residues coordinate CDP: Gly313 and Phe318. An ADP-binding site is contributed by Phe318. Residue Glu319 participates in AMP binding. ATP is bound by residues Glu319, Asp351, and Thr352. Asp351 serves as a coordination point for Mg(2+).

This sequence belongs to the phosphoglycerate kinase family. Monomer. It depends on Mg(2+) as a cofactor.

The enzyme catalyses (2R)-3-phosphoglycerate + ATP = (2R)-3-phospho-glyceroyl phosphate + ADP. The protein operates within carbohydrate degradation; glycolysis; pyruvate from D-glyceraldehyde 3-phosphate: step 2/5. The protein is Phosphoglycerate kinase (PGK) of Condylostoma magnum.